Here is a 285-residue protein sequence, read N- to C-terminus: Energy-coupling factor transporter ATP-binding protein EcfA1 (285 aa).

An ABC transporter domain is found at 9-246; that stretch reads VTVEHLSFTY…VSLIKNAGLD (238 aa). Residue 43-50 participates in ATP binding; it reads GHNGSGKS.

The protein belongs to the ABC transporter superfamily. Energy-coupling factor EcfA family. Forms a stable energy-coupling factor (ECF) transporter complex composed of 2 membrane-embedded substrate-binding proteins (S component), 2 ATP-binding proteins (A component) and 2 transmembrane proteins (T component).

It localises to the cell membrane. Its function is as follows. ATP-binding (A) component of a common energy-coupling factor (ECF) ABC-transporter complex. Unlike classic ABC transporters this ECF transporter provides the energy necessary to transport a number of different substrates. The polypeptide is Energy-coupling factor transporter ATP-binding protein EcfA1 (Lactobacillus gasseri (strain ATCC 33323 / DSM 20243 / BCRC 14619 / CIP 102991 / JCM 1131 / KCTC 3163 / NCIMB 11718 / NCTC 13722 / AM63)).